We begin with the raw amino-acid sequence, 435 residues long: Polyadenylate-binding protein RBP47B (435 aa).

Residues 1 to 15 (MQTTNGSDSTLATSG) show a composition bias toward polar residues. Disordered regions lie at residues 1–41 (MQTT…QQWM) and 85–104 (YGSY…RGSG). Low complexity predominate over residues 29-41 (QWQQQQQQQQQWM). RRM domains lie at 108–188 (KTLW…WASF), 202–281 (LSVF…IATP), and 321–393 (ATIF…WGRS). The segment at 392–412 (RSPNKQWRGDSGQQWNGGYSR) is disordered.

The protein belongs to the polyadenylate-binding RBP47 family. In terms of assembly, interacts with the poly(A) tail of mRNA in nucleus. As to expression, expressed at low levels in leaves, stems, flowers, and seedlings.

It is found in the nucleus. Its subcellular location is the cytoplasmic granule. Functionally, heterogeneous nuclear ribonucleoprotein (hnRNP)-protein binding the poly(A) tail of mRNA and probably involved in some steps of pre-mRNA maturation. In Arabidopsis thaliana (Mouse-ear cress), this protein is Polyadenylate-binding protein RBP47B (RBP47B).